The chain runs to 178 residues: Large ribosomal subunit protein uL6 (178 aa).

It belongs to the universal ribosomal protein uL6 family. Part of the 50S ribosomal subunit.

This protein binds to the 23S rRNA, and is important in its secondary structure. It is located near the subunit interface in the base of the L7/L12 stalk, and near the tRNA binding site of the peptidyltransferase center. This Staphylococcus epidermidis (strain ATCC 35984 / DSM 28319 / BCRC 17069 / CCUG 31568 / BM 3577 / RP62A) protein is Large ribosomal subunit protein uL6.